The primary structure comprises 410 residues: Lipoyl synthase, mitochondrial (410 aa).

[4Fe-4S] cluster-binding residues include cysteine 134, cysteine 139, cysteine 145, cysteine 165, cysteine 169, cysteine 172, and serine 390. Residues 148–379 (AGKSTAATAT…AKIGNDLGFL (232 aa)) enclose the Radical SAM core domain.

It belongs to the radical SAM superfamily. Lipoyl synthase family. [4Fe-4S] cluster serves as cofactor.

Its subcellular location is the mitochondrion. The enzyme catalyses [[Fe-S] cluster scaffold protein carrying a second [4Fe-4S](2+) cluster] + N(6)-octanoyl-L-lysyl-[protein] + 2 oxidized [2Fe-2S]-[ferredoxin] + 2 S-adenosyl-L-methionine + 4 H(+) = [[Fe-S] cluster scaffold protein] + N(6)-[(R)-dihydrolipoyl]-L-lysyl-[protein] + 4 Fe(3+) + 2 hydrogen sulfide + 2 5'-deoxyadenosine + 2 L-methionine + 2 reduced [2Fe-2S]-[ferredoxin]. Its pathway is protein modification; protein lipoylation via endogenous pathway; protein N(6)-(lipoyl)lysine from octanoyl-[acyl-carrier-protein]: step 2/2. Catalyzes the radical-mediated insertion of two sulfur atoms into the C-6 and C-8 positions of the octanoyl moiety bound to the lipoyl domains of lipoate-dependent enzymes, thereby converting the octanoylated domains into lipoylated derivatives. The chain is Lipoyl synthase, mitochondrial from Schistosoma mansoni (Blood fluke).